A 275-amino-acid polypeptide reads, in one-letter code: Elongation factor Ts (275 aa).

Positions 76 to 79 are involved in Mg(2+) ion dislocation from EF-Tu; it reads TDFV.

It belongs to the EF-Ts family.

Its subcellular location is the cytoplasm. In terms of biological role, associates with the EF-Tu.GDP complex and induces the exchange of GDP to GTP. It remains bound to the aminoacyl-tRNA.EF-Tu.GTP complex up to the GTP hydrolysis stage on the ribosome. This Rhodococcus erythropolis (strain PR4 / NBRC 100887) protein is Elongation factor Ts.